Reading from the N-terminus, the 365-residue chain is 3-dehydroquinate synthase (365 aa).

NAD(+)-binding positions include 75–80 (DAESGK), 109–113 (GAATD), 133–134 (TT), Lys-146, and Lys-155. Glu-188, His-253, and His-269 together coordinate Zn(2+).

It belongs to the sugar phosphate cyclases superfamily. Dehydroquinate synthase family. It depends on NAD(+) as a cofactor. The cofactor is Co(2+). Requires Zn(2+) as cofactor.

The protein resides in the cytoplasm. It catalyses the reaction 7-phospho-2-dehydro-3-deoxy-D-arabino-heptonate = 3-dehydroquinate + phosphate. The protein operates within metabolic intermediate biosynthesis; chorismate biosynthesis; chorismate from D-erythrose 4-phosphate and phosphoenolpyruvate: step 2/7. Functionally, catalyzes the conversion of 3-deoxy-D-arabino-heptulosonate 7-phosphate (DAHP) to dehydroquinate (DHQ). The sequence is that of 3-dehydroquinate synthase from Corynebacterium efficiens (strain DSM 44549 / YS-314 / AJ 12310 / JCM 11189 / NBRC 100395).